The following is a 140-amino-acid chain: uncharacterized protein (140 aa).

A VOC domain is found at 4-127 (TLTHLALHVP…AGNYVEFSYG (124 aa)).

This is an uncharacterized protein from Pseudomonas aeruginosa (strain ATCC 15692 / DSM 22644 / CIP 104116 / JCM 14847 / LMG 12228 / 1C / PRS 101 / PAO1).